The sequence spans 211 residues: Large ribosomal subunit protein uL3 (211 aa).

Residues 130–154 (RGPMAHGSKFHRHQGSNGSATTPGR) form a disordered region.

Belongs to the universal ribosomal protein uL3 family. Part of the 50S ribosomal subunit. Forms a cluster with proteins L14 and L19.

Its function is as follows. One of the primary rRNA binding proteins, it binds directly near the 3'-end of the 23S rRNA, where it nucleates assembly of the 50S subunit. In Lachnospira eligens (strain ATCC 27750 / DSM 3376 / VPI C15-48 / C15-B4) (Eubacterium eligens), this protein is Large ribosomal subunit protein uL3.